The chain runs to 314 residues: Taste receptor type 2 member 42 (314 aa).

Residues 1–7 (MPTELDK) lie on the Extracellular side of the membrane. A helical membrane pass occupies residues 8–28 (IFLILAIVEFIIGLLGNVFIG). At 29–50 (LVNCSEGIKNQKVFSADFILTC) the chain is on the cytoplasmic side. Residues 51 to 71 (LAISTIGQLLVILFDSFLVGL) form a helical membrane-spanning segment. The Extracellular segment spans residues 72–101 (ASHLYTTYRLGKLVILLWHMTNHLTTWLAT). A helical transmembrane segment spans residues 102–122 (CLSIFYFFKIAHFPHSLFLWL). Over 123-127 (RWRMN) the chain is Cytoplasmic. A helical membrane pass occupies residues 128-148 (GMIVMLRTLSLFLLIFDSLVL). Over 149–187 (KLFIDISLNIIDKSNLTLYFDESKTLYDKLSILKTLLSL) the chain is Extracellular. An N-linked (GlcNAc...) asparagine glycan is attached at Asn-163. A helical membrane pass occupies residues 188–208 (TSFIPFSLSLTSLLFLFLSLV). Over 209-238 (RHTRNLKLSSLGSRDSSTEAHRRAMKMVMS) the chain is Cytoplasmic. A helical transmembrane segment spans residues 239–259 (FLFLFIVHFFSLQVANWIFFM). Over 260 to 265 (SWNNKY) the chain is Extracellular. Residues 266–286 (IKFVMLALNAFPSCHSFILIL) traverse the membrane as a helical segment. The Cytoplasmic segment spans residues 287–314 (GNSKLRQTAVRLLSHLRNYTKTSNPLPL).

It belongs to the G-protein coupled receptor T2R family.

It localises to the membrane. Receptor that may play a role in the perception of bitterness and is gustducin-linked. May play a role in sensing the chemical composition of the gastrointestinal content. The activity of this receptor may stimulate alpha gustducin, mediate PLC-beta-2 activation and lead to the gating of TRPM5. The protein is Taste receptor type 2 member 42 (TAS2R42) of Pongo pygmaeus (Bornean orangutan).